The following is a 194-amino-acid chain: Cytochrome c biogenesis ATP-binding export protein CcmA (194 aa).

In terms of domain architecture, ABC transporter spans 5–194; the sequence is LALDGVACIR…LDELVMGVLA (190 aa). 37 to 44 contacts ATP; sequence GPNGAGKS.

This sequence belongs to the ABC transporter superfamily. CcmA exporter (TC 3.A.1.107) family. As to quaternary structure, the complex is composed of two ATP-binding proteins (CcmA) and two transmembrane proteins (CcmB).

It localises to the cell inner membrane. The enzyme catalyses heme b(in) + ATP + H2O = heme b(out) + ADP + phosphate + H(+). Its function is as follows. Part of the ABC transporter complex CcmAB involved in the biogenesis of c-type cytochromes; once thought to export heme, this seems not to be the case, but its exact role is uncertain. Responsible for energy coupling to the transport system. The chain is Cytochrome c biogenesis ATP-binding export protein CcmA from Sphingopyxis alaskensis (strain DSM 13593 / LMG 18877 / RB2256) (Sphingomonas alaskensis).